Consider the following 140-residue polypeptide: Large ribosomal subunit protein uL15 (140 aa).

The interval 1–32 is disordered; sequence MDTKKFRGSRTCGGGTHKNRRGAGNRGGRGKA.

It belongs to the universal ribosomal protein uL15 family. Part of the 50S ribosomal subunit.

Its function is as follows. Binds to the 23S rRNA. The polypeptide is Large ribosomal subunit protein uL15 (Methanosarcina acetivorans (strain ATCC 35395 / DSM 2834 / JCM 12185 / C2A)).